The chain runs to 344 residues: GTPase Obg (344 aa).

The region spanning Met-1–Ile-159 is the Obg domain. Residues Gly-126–Asp-146 are disordered. The segment covering Phe-130–Gly-144 has biased composition (polar residues). Residues Ala-160–Ser-327 enclose the OBG-type G domain. Residues Gly-166–Ser-173, Phe-191–His-195, Asp-212–Gly-215, Asn-279–Asp-282, and Ser-308–Val-310 contribute to the GTP site. Residues Ser-173 and Thr-193 each coordinate Mg(2+).

It belongs to the TRAFAC class OBG-HflX-like GTPase superfamily. OBG GTPase family. In terms of assembly, monomer. The cofactor is Mg(2+).

The protein resides in the cytoplasm. Its function is as follows. An essential GTPase which binds GTP, GDP and possibly (p)ppGpp with moderate affinity, with high nucleotide exchange rates and a fairly low GTP hydrolysis rate. Plays a role in control of the cell cycle, stress response, ribosome biogenesis and in those bacteria that undergo differentiation, in morphogenesis control. This Roseobacter denitrificans (strain ATCC 33942 / OCh 114) (Erythrobacter sp. (strain OCh 114)) protein is GTPase Obg.